The sequence spans 198 residues: Recombination protein RecR (198 aa).

The segment at 57-72 adopts a C4-type zinc-finger fold; the sequence is CSICGNLTDDDPCHIC. One can recognise a Toprim domain in the interval 80 to 175; it reads TTILVVEDAK…KVTRLARGLA (96 aa).

The protein belongs to the RecR family.

Functionally, may play a role in DNA repair. It seems to be involved in an RecBC-independent recombinational process of DNA repair. It may act with RecF and RecO. This chain is Recombination protein RecR, found in Streptococcus pyogenes serotype M1.